The primary structure comprises 263 residues: Acetylglutamate kinase (263 aa).

Residues 48 to 49, Arg-70, and Asn-162 each bind substrate; that span reads GG.

Belongs to the acetylglutamate kinase family. ArgB subfamily.

It is found in the cytoplasm. It carries out the reaction N-acetyl-L-glutamate + ATP = N-acetyl-L-glutamyl 5-phosphate + ADP. It functions in the pathway amino-acid biosynthesis; L-arginine biosynthesis; N(2)-acetyl-L-ornithine from L-glutamate: step 2/4. Functionally, catalyzes the ATP-dependent phosphorylation of N-acetyl-L-glutamate. In Vibrio vulnificus (strain YJ016), this protein is Acetylglutamate kinase.